The chain runs to 1295 residues: MEDGRPVWAPHPTEGFQMGNIVDIGPDSLTIEPLGQKGKTFLALINQVFPAEEDSKKDVEDNCSLMYLNEATLLHNIKVRYSKDRIYTYVANILIAVNPYFDIPKIYSSDSIKSYQGKSLGTMPPHVFAIADKAFRDMKVLKMSQSIIVSGESGAGKTENTKFVLRYLTESYGSGQDIDDRIVEANPLLEAFGNAKTVRNNNSSRFGKFVEIHFNEKSSVVGGFVSHYLLEKSRICVQGKEERNYHIFYRLCAGASEDIRERLHLSSPDNFRYLNRGCTRYFANKETDKQILQNRKTPEHLKAGSLKDPLLDDHGDFVRMCTAMKKIGLDDEEKLDLFRVVAGVLHLGNIDFEEAGSTSGGCNLKNKSTQSLEYCAELLGLDQDDLRVSLTTRVMLTTAGGTKGTVIKVPLKVEQANNARDALAKTVYSHLFDHVVNRVNQCFPFETSSYFIGVLDIAGFEYFEHNSFEQFCINYCNEKLQQFFNERILKEEQELYQKEGLGVNEVHYVDNQDCIDLIEAKLMGILDILDEENRLPQPSDQHFTSAVHQKHKDHFRLSIPRKSKLAVHRNIRDDEGFIVRHFAGAVCYETTQFVEKNNDALHMSLESLICESRDKFIRELFESSTNNNKDTKQKAGKLSFISVGNKFKTQLNLLLDKLRSTGASFIRCIKPNLKMTSHDFEGAQILSQLQCSGMVSVLDLMQGGFPSRASFHELYNMYKKYMPDKLARLDPRLFCKALFKALGLNEVDYKFGLTKVFFRPGKFAEFDQIMKSDPDHLAQLVKRVNHWLICSRWKKVQWCSLSVIKLKNKIKYRAEACIKMQKTIRMWLCKRRHKPRIDGLVKVGTLKKRLDKFNEVVSALKDGKAEMNKQVKDLEISIDALMAKIKSTMMTREQIQKEYDALVKSSEVLLSALQKKKQQEEEAERLRRIQEEMEKERKRREEDEQRRRKEEEERRMKLEMEAKRKQEEEERKKREDDEKRIQAEVEAQLARQREEESQQQAVLEQERRDRELALRIARSEAELIIDEAQADPAALRSLDFHPVTSKINGTRRTMTPEQMAKEMSEILSRGPAVQATKAAAGTKKHDLSKWKYAELRDTINTSCDIELLAACREEFHRRLKVYHAWKSKNKKRNTETEQRAPKSVTDYDFAPFLNNSPQQNPAAQLPARQQEIEMNRQQRFFRIPFIRPADQYKDPQNKKKGWWYAHFDGPWIARQMELHPDKPPILLVAGKDDMEMCELNLEETGLTRKRGAEILPRQFEEIWERCGGIQYLQSAIESRQARPTYATAMLQNLLK.

The Myosin N-terminal SH3-like domain occupies 2–53; sequence EDGRPVWAPHPTEGFQMGNIVDIGPDSLTIEPLGQKGKTFLALINQVFPAEE. The 715-residue stretch at 57 to 771 folds into the Myosin motor domain; the sequence is KDVEDNCSLM…KFAEFDQIMK (715 aa). 151-158 serves as a coordination point for ATP; sequence GESGAGKT. Residue serine 267 is modified to Phosphoserine. Positions 273 to 317 are responsible for slow ATPase activity; sequence YLNRGCTRYFANKETDKQILQNRKTPEHLKAGSLKDPLLDDHGDF. Threonine 405 carries the post-translational modification Phosphothreonine. Residue serine 604 is modified to Phosphoserine. An actin-binding region spans residues 651 to 673; sequence LNLLLDKLRSTGASFIRCIKPNL. The required for binding calmodulin stretch occupies residues 782–810; it reads KRVNHWLICSRWKKVQWCSLSVIKLKNKI. An IQ domain is found at 813-842; the sequence is RAEACIKMQKTIRMWLCKRRHKPRIDGLVK. Residues 835 to 916 form a three-helix bundle region; the sequence is PRIDGLVKVG…EVLLSALQKK (82 aa). The segment at 917–984 is SAH; sequence KQQEEEAERL…EDDEKRIQAE (68 aa). The interval 934–955 is disordered; sequence EKERKRREEDEQRRRKEEEERR. An interaction with TAX1BP1 and CALCOCO2/NDP52 region spans residues 1061–1286; it reads KEMSEILSRG…ESRQARPTYA (226 aa). The interval 1117 to 1119 is interaction with OPTN; sequence RRL. At serine 1156 the chain carries Phosphoserine. The tract at residues 1158–1286 is interaction with TOM1; the sequence is QQNPAAQLPA…ESRQARPTYA (129 aa).

It belongs to the TRAFAC class myosin-kinesin ATPase superfamily. Myosin family. As to quaternary structure, homodimer; dimerization seems to implicate the unfolding of the three-helix bundle region creating an additional calmodulin binding site, and cargo binding. Able to function as a monomer under specific conditions in vitro. Forms a complex with CFTR and DAB2 in the apical membrane of epithelial cells. Component of the DISP/DOCK7-induced septin displacement complex, at least composed of DOCK7, LRCH3 and MYO6. Binding to calmodulin through a unique insert, not found in other myosins, located in the neck region between the motor domain and the IQ domain appears to contribute to the directionality reversal. This interaction occurs only if the C-terminal lobe of calmodulin is occupied by calcium. Interaction with F-actin/ACTN1 occurs only at the apical brush border domain of the proximal tubule cells. Interacts with DAB2. In vitro, the C-terminal globular tail binds a C-terminal region of DAB2. Interacts with CFTR. Interacts with CABP5. Interacts (via residues 1158-1286) with TOM1 (via residues 392-463). Interacts (via residues 1060-1285) with OPTN. Interacts (via residues 1060-1285) with TAX1BP1 and CALCOCO2/NDP52. Interacts with TOM1L2. Interacts with CLIC5; may work together in a complex which also includes RDX and MYO6 to stabilize linkages between the plasma membrane and subjacent actin cytoskeleton at the base of stereocilia. Phosphorylation in the motor domain, induced by EGF, results in translocation of MYO6 from the cell surface to membrane ruffles and affects F-actin dynamics. Phosphorylated in vitro by p21-activated kinase (PAK). As to expression, expressed in the retina (at protein level).

The protein resides in the golgi apparatus. Its subcellular location is the trans-Golgi network membrane. It is found in the nucleus. The protein localises to the cytoplasm. It localises to the perinuclear region. The protein resides in the membrane. Its subcellular location is the clathrin-coated pit. It is found in the cytoplasmic vesicle. The protein localises to the clathrin-coated vesicle. It localises to the cell projection. The protein resides in the filopodium. Its subcellular location is the ruffle membrane. It is found in the microvillus. The protein localises to the cytosol. Functionally, myosins are actin-based motor molecules with ATPase activity. Unconventional myosins serve in intracellular movements. Myosin 6 is a reverse-direction motor protein that moves towards the minus-end of actin filaments. Has slow rate of actin-activated ADP release due to weak ATP binding. Functions in a variety of intracellular processes such as vesicular membrane trafficking and cell migration. Required for the structural integrity of the Golgi apparatus via the p53-dependent pro-survival pathway. Appears to be involved in a very early step of clathrin-mediated endocytosis in polarized epithelial cells. Together with TOM1, mediates delivery of endocytic cargo to autophagosomes thereby promoting autophagosome maturation and driving fusion with lysosomes. Links TOM1 with autophagy receptors, such as TAX1BP1; CALCOCO2/NDP52 and OPTN. May act as a regulator of F-actin dynamics. As part of the DISP complex, may regulate the association of septins with actin and thereby regulate the actin cytoskeleton. May play a role in transporting DAB2 from the plasma membrane to specific cellular targets. May play a role in the extension and network organization of neurites. Required for structural integrity of inner ear hair cells. Required for the correct localization of CLIC5 and RDX at the stereocilium base. Modulates RNA polymerase II-dependent transcription. The sequence is that of Unconventional myosin-VI from Bos taurus (Bovine).